The sequence spans 134 residues: Small ribosomal subunit protein uS11 (134 aa).

A disordered region spans residues 1–21 (MPPKSRQGAGRKVRRKEKKNV). The span at 9 to 21 (AGRKVRRKEKKNV) shows a compositional bias: basic residues.

The protein belongs to the universal ribosomal protein uS11 family. In terms of assembly, part of the 30S ribosomal subunit. Interacts with proteins S7 and S18. Binds to IF-3.

In terms of biological role, located on the platform of the 30S subunit, it bridges several disparate RNA helices of the 16S rRNA. Forms part of the Shine-Dalgarno cleft in the 70S ribosome. In Thermobifida fusca (strain YX), this protein is Small ribosomal subunit protein uS11.